Here is a 434-residue protein sequence, read N- to C-terminus: ATP-dependent protease ATPase subunit HslU (434 aa).

Residues I18, 60 to 65, D247, E312, and R384 each bind ATP; that span reads GVGKTE.

The protein belongs to the ClpX chaperone family. HslU subfamily. In terms of assembly, a double ring-shaped homohexamer of HslV is capped on each side by a ring-shaped HslU homohexamer. The assembly of the HslU/HslV complex is dependent on binding of ATP.

The protein resides in the cytoplasm. In terms of biological role, ATPase subunit of a proteasome-like degradation complex; this subunit has chaperone activity. The binding of ATP and its subsequent hydrolysis by HslU are essential for unfolding of protein substrates subsequently hydrolyzed by HslV. HslU recognizes the N-terminal part of its protein substrates and unfolds these before they are guided to HslV for hydrolysis. The polypeptide is ATP-dependent protease ATPase subunit HslU (Brucella melitensis biotype 2 (strain ATCC 23457)).